We begin with the raw amino-acid sequence, 303 residues long: Glycine--tRNA ligase alpha subunit (303 aa).

This sequence belongs to the class-II aminoacyl-tRNA synthetase family. In terms of assembly, tetramer of two alpha and two beta subunits.

Its subcellular location is the cytoplasm. The catalysed reaction is tRNA(Gly) + glycine + ATP = glycyl-tRNA(Gly) + AMP + diphosphate. The sequence is that of Glycine--tRNA ligase alpha subunit from Salmonella paratyphi A (strain ATCC 9150 / SARB42).